Here is a 942-residue protein sequence, read N- to C-terminus: AP-1 complex subunit beta (942 aa).

HEAT repeat units lie at residues 45 to 82 (KDVSMLFTHVLNCMQTHNLELKKLVYLYVMNYAKNHPD), 117 to 154 (NITEHLCEPLRHALKDQDPYVRKTAAVCVAKLYDVNPE), 156 to 193 (VENQGFLNILNDLLGDSNPMVVANAVASLTEIDEVSKK), 273 to 313 (DVIR…KRPE), 384 to 421 (RASERCIQVLLDLIQTKVNYVVQEAIIVIKDIFRKYPN), and 458 to 495 (DNAHELLNSFLEGFKDENSQVQLQLLTSIVKLFLKRPK). The disordered stretch occupies residues 590 to 700 (GLRNKEEEDE…NDLSFLGGGG (111 aa)). A compositionally biased stretch (acidic residues) spans 596 to 609 (EEDEEEPDYVDDDN). 2 stretches are compositionally biased toward low complexity: residues 613 to 645 (QQGGQQQQGGYQQQQQQQQQGGYQQQQPQQQQP) and 664 to 677 (NNNNNNYGNNNNNN). A compositionally biased stretch (polar residues) spans 678–693 (MYSPQPQQFNGNSNDL).

Belongs to the adaptor complexes large subunit family. As to quaternary structure, adaptor protein complex 1 (AP-1) is a heterotetramer composed of two large adaptins (gamma-type subunit and beta-type subunit), a medium adaptin (mu-type subunit) and a small adaptin (sigma-type subunit).

It localises to the golgi apparatus. The protein localises to the trans-Golgi network. It is found in the cytoplasmic vesicle. Its subcellular location is the clathrin-coated vesicle membrane. Subunit of clathrin-associated adaptor protein complex 1 that plays a role in protein sorting in the trans-Golgi network (TGN) and endosomes. The AP complexes mediate the recruitment of clathrin to membranes and the recognition of sorting signals within the cytosolic tails of transmembrane cargo molecules. Also involved in early steps of phagocytosis and macropinocytosis. The protein is AP-1 complex subunit beta (ap1b1) of Dictyostelium discoideum (Social amoeba).